Reading from the N-terminus, the 400-residue chain is Elongation factor Tu (400 aa).

The 200-residue stretch at 10–209 (KPHVNVGTIG…AVDSYIPTPE (200 aa)) folds into the tr-type G domain. A G1 region spans residues 19-26 (GHVDHGKT). Residue 19–26 (GHVDHGKT) coordinates GTP. Mg(2+) is bound at residue T26. Residues 60-64 (GITIA) form a G2 region. Residues 81 to 84 (DCPG) form a G3 region. Residues 81 to 85 (DCPGH) and 136 to 139 (NKVD) each bind GTP. The tract at residues 136–139 (NKVD) is G4. Residues 174–176 (SAL) are G5.

Belongs to the TRAFAC class translation factor GTPase superfamily. Classic translation factor GTPase family. EF-Tu/EF-1A subfamily. In terms of assembly, monomer.

The protein localises to the cytoplasm. It carries out the reaction GTP + H2O = GDP + phosphate + H(+). Functionally, GTP hydrolase that promotes the GTP-dependent binding of aminoacyl-tRNA to the A-site of ribosomes during protein biosynthesis. This is Elongation factor Tu from Moorella thermoacetica (strain ATCC 39073 / JCM 9320).